Here is a 205-residue protein sequence, read N- to C-terminus: Large ribosomal subunit protein uL3c (205 aa).

A disordered region spans residues 127-153 (HFSRGPMSHGSKNHRQPGSIGAGTTPG).

It belongs to the universal ribosomal protein uL3 family. Part of the 50S ribosomal subunit.

The protein localises to the plastid. Its subcellular location is the chloroplast. In terms of biological role, one of the primary rRNA binding proteins, it binds directly near the 3'-end of the 23S rRNA, where it nucleates assembly of the 50S subunit. The sequence is that of Large ribosomal subunit protein uL3c (rpl3) from Porphyra purpurea (Red seaweed).